The chain runs to 243 residues: MQSSKDAIYSQPQQVSDFRFDDTVAEVFPDMIQRSVPGYNTIVDAIGQLAGRYATNNSNIYDLGCSLGAVSLAAAKYVVADNCSIIAVDNSEAMAQRCARHVKAYKANTPIEVICDDLQNIHIENASSVVMNFTLQFIDPTQRDQIIQSIYDGLAPGGIFILSEKLRHASEQGNELLIDLHHEFKRRNGYSELEISQKRESIENILRAETFEAHQTRLQNAGFDDVVLWFQCFNFASIVAIKS.

Residues Tyr39, 64–66, 89–90, 117–118, Asn132, and Arg199 contribute to the S-adenosyl-L-methionine site; these read GCS, DN, and DL.

It belongs to the class I-like SAM-binding methyltransferase superfamily. Cx-SAM synthase family. As to quaternary structure, homodimer.

The enzyme catalyses prephenate + S-adenosyl-L-methionine = carboxy-S-adenosyl-L-methionine + 3-phenylpyruvate + H2O. In terms of biological role, catalyzes the conversion of S-adenosyl-L-methionine (SAM) to carboxy-S-adenosyl-L-methionine (Cx-SAM). This is Carboxy-S-adenosyl-L-methionine synthase from Pseudoalteromonas atlantica (strain T6c / ATCC BAA-1087).